A 157-amino-acid polypeptide reads, in one-letter code: Protein-export protein SecB (157 aa).

This sequence belongs to the SecB family. In terms of assembly, homotetramer, a dimer of dimers. One homotetramer interacts with 1 SecA dimer.

It is found in the cytoplasm. In terms of biological role, one of the proteins required for the normal export of preproteins out of the cell cytoplasm. It is a molecular chaperone that binds to a subset of precursor proteins, maintaining them in a translocation-competent state. It also specifically binds to its receptor SecA. This chain is Protein-export protein SecB, found in Proteus mirabilis (strain HI4320).